The primary structure comprises 179 residues: Large ribosomal subunit protein uL5 (179 aa).

Belongs to the universal ribosomal protein uL5 family. Part of the 50S ribosomal subunit; part of the 5S rRNA/L5/L18/L25 subcomplex. Contacts the 5S rRNA and the P site tRNA. Forms a bridge to the 30S subunit in the 70S ribosome.

This is one of the proteins that bind and probably mediate the attachment of the 5S RNA into the large ribosomal subunit, where it forms part of the central protuberance. In the 70S ribosome it contacts protein S13 of the 30S subunit (bridge B1b), connecting the 2 subunits; this bridge is implicated in subunit movement. Contacts the P site tRNA; the 5S rRNA and some of its associated proteins might help stabilize positioning of ribosome-bound tRNAs. The protein is Large ribosomal subunit protein uL5 of Xylella fastidiosa (strain M12).